A 503-amino-acid chain; its full sequence is MTEIRFSTDKESFIETARAAADGTRVPVEARVTVADPFEAYRRARDENTDGFYLETTGGQSGWGYFGIEPIERVEVSAGATPAQDGGSPSLEAIDDLLDREHLERGDCTVPYPCGAFGWLSYDVARELEDIPETTVSDGLPRLQFGVFDCIAAWEEPHDGNVEIHVTACPTVDGSPESAFERGRTMARELAQDAIHGEKHVQSQPTAASQATFESECGEAAFADRVRQIKQYVRDGDTFQTNVSHRLTAPAAVHPVDTFDAVRRVNPAPYSALLEFPGVDLVSASPELLLDVDGDQLLTEPIAGTRPRGATPSEDEDLEVDLCSDEKERAEHAMLVDLERNDLGKVSEYGSVDVAEYRRVDRYSEVMHLVSLIEGELRDAVSIADAVAAVFPGGTITGAPKPRTMEIIDEVERTRRGPYTGSIGMFGFDDRATLNITIRTLVHYDDEYRLRVGSGIVHDSVPEAEYRETLDKARALVTAVDEALGEQGSFAVESETEPMEGMR.

269–271 (PYS) contacts L-tryptophan. 304 to 305 (GT) contributes to the chorismate binding site. Glu-331 serves as a coordination point for Mg(2+). Residues Tyr-419, Arg-439, 453-455 (GSG), and Gly-455 each bind chorismate. Residue Glu-468 participates in Mg(2+) binding.

The protein belongs to the anthranilate synthase component I family. As to quaternary structure, tetramer of two components I and two components II. It depends on Mg(2+) as a cofactor.

The enzyme catalyses chorismate + L-glutamine = anthranilate + pyruvate + L-glutamate + H(+). The protein operates within amino-acid biosynthesis; L-tryptophan biosynthesis; L-tryptophan from chorismate: step 1/5. This chain is Anthranilate synthase component 1 3 (trpE3), found in Haloarcula marismortui (strain ATCC 43049 / DSM 3752 / JCM 8966 / VKM B-1809) (Halobacterium marismortui).